Reading from the N-terminus, the 222-residue chain is Germin-like protein subfamily 1 member 16 (222 aa).

Residues 1-22 (MRVSQSLIPFAIIALVLSFVNA) form the signal peptide. Cysteines 32 and 48 form a disulfide. Residues 62–213 (SGLNVPGNTN…AFQLDANVVK (152 aa)) enclose the Cupin type-1 domain. The N-linked (GlcNAc...) asparagine glycan is linked to Asn-77. Mn(2+) is bound by residues His-110, His-112, Glu-117, and His-159.

This sequence belongs to the germin family. In terms of assembly, oligomer (believed to be a pentamer but probably hexamer).

The protein localises to the secreted. It localises to the extracellular space. It is found in the apoplast. Its function is as follows. May play a role in plant defense. Probably has no oxalate oxidase activity even if the active site is conserved. This Arabidopsis thaliana (Mouse-ear cress) protein is Germin-like protein subfamily 1 member 16.